Consider the following 680-residue polypeptide: Fermitin family homolog 2 (680 aa).

The segment at 40–81 is interaction with membranes containing phosphatidylinositol phosphate; the sequence is HIGGVMLKLVEKLDVKKDWSDHALWWEKKRTWLLKTHWTLDK. Residues 141 to 165 are disordered; it reads LKKPRDPTKKKKKKLDDQSEDEALE. 4 positions are modified to phosphoserine: S159, S181, S339, and S351. The 473-residue stretch at 189–661 folds into the FERM domain; that stretch reads MTPTYDAHDG…GYIFLSTRAK (473 aa). Residues 380-476 enclose the PH domain; sequence KVFKPKKLTL…WMAACRLASK (97 aa). K383 provides a ligand contact to a 1,2-diacyl-sn-glycero-3-phospho-(1D-myo-inositol-3,4,5-trisphosphate). A Phosphoserine modification is found at S666.

It belongs to the kindlin family. As to quaternary structure, interacts with ILK. Interacts with FBLIM1. Interacts with ITGB1 and ITGB3. Interacts with active, unphosphorylated CTNNB1. Identified in a complex with CTNNB1 and TCF7L2/TCF4. Interacts with ITGB1; the interaction is inhibited in presence of ITGB1BP1. In terms of tissue distribution, ubiquitous. Found in numerous tumor tissues.

The protein localises to the cytoplasm. It localises to the cell cortex. Its subcellular location is the cytoskeleton. The protein resides in the stress fiber. It is found in the cell junction. The protein localises to the focal adhesion. It localises to the membrane. Its subcellular location is the cell projection. The protein resides in the lamellipodium membrane. It is found in the nucleus. The protein localises to the myofibril. It localises to the sarcomere. Its subcellular location is the i band. The protein resides in the cell surface. Scaffolding protein that enhances integrin activation mediated by TLN1 and/or TLN2, but activates integrins only weakly by itself. Binds to membranes enriched in phosphoinositides. Enhances integrin-mediated cell adhesion onto the extracellular matrix and cell spreading; this requires both its ability to interact with integrins and with phospholipid membranes. Required for the assembly of focal adhesions. Participates in the connection between extracellular matrix adhesion sites and the actin cytoskeleton and also in the orchestration of actin assembly and cell shape modulation. Recruits FBLIM1 to focal adhesions. Plays a role in the TGFB1 and integrin signaling pathways. Stabilizes active CTNNB1 and plays a role in the regulation of transcription mediated by CTNNB1 and TCF7L2/TCF4 and in Wnt signaling. The polypeptide is Fermitin family homolog 2 (FERMT2) (Homo sapiens (Human)).